A 313-amino-acid chain; its full sequence is ADP-L-glycero-D-manno-heptose-6-epimerase (313 aa).

Residues 10–11 (MI), 31–32 (DN), Lys-38, Arg-53, 75–79 (EGACS), and Asn-92 contribute to the NADP(+) site. Tyr-139 serves as the catalytic Proton acceptor. Residue Lys-143 coordinates NADP(+). Asn-174 serves as a coordination point for substrate. NADP(+) is bound by residues Val-175 and Lys-183. Lys-183 acts as the Proton acceptor in catalysis. Substrate-binding positions include Ser-185, His-192, 206 to 209 (FAGS), Arg-214, and Tyr-277.

The protein belongs to the NAD(P)-dependent epimerase/dehydratase family. HldD subfamily. As to quaternary structure, homopentamer. NADP(+) serves as cofactor.

The enzyme catalyses ADP-D-glycero-beta-D-manno-heptose = ADP-L-glycero-beta-D-manno-heptose. The protein operates within nucleotide-sugar biosynthesis; ADP-L-glycero-beta-D-manno-heptose biosynthesis; ADP-L-glycero-beta-D-manno-heptose from D-glycero-beta-D-manno-heptose 7-phosphate: step 4/4. It participates in bacterial outer membrane biogenesis; LPS core biosynthesis. Functionally, catalyzes the interconversion between ADP-D-glycero-beta-D-manno-heptose and ADP-L-glycero-beta-D-manno-heptose via an epimerization at carbon 6 of the heptose. This is ADP-L-glycero-D-manno-heptose-6-epimerase from Vibrio vulnificus (strain CMCP6).